The following is a 268-amino-acid chain: L-proline trans-4-hydroxylase (268 aa).

Fe cation-binding residues include histidine 113, aspartate 115, and histidine 218.

This sequence belongs to the PhyH family. As to quaternary structure, monomer. It depends on Fe(2+) as a cofactor.

The enzyme catalyses L-proline + 2-oxoglutarate + O2 = trans-4-hydroxy-L-proline + succinate + CO2. It functions in the pathway antibiotic biosynthesis. Its activity is regulated as follows. Competitively inhibited by pyridine-2,4-dicarboxylate. Inhibited by diethyl pyrocarbonate (DEPC), 3,4-dihydroxybenzoate, pyridine-2,5-dicarboxylate, alpha,alpha'-dipyridyl, and some metal ions such as Co(2+) and Zn(2+). Functionally, involved in the biosynthesis of the peptidolactone antibiotic etamycin (viridogrisein). Catalyzes the hydroxylation of free L-proline at the C-4 position to yield trans-4-hydroxy-L-proline. The polypeptide is L-proline trans-4-hydroxylase (Streptomyces griseoviridis).